We begin with the raw amino-acid sequence, 332 residues long: Adenosine deaminase (332 aa).

Zn(2+) is bound by residues H12 and H14. Residues H14, D16, and G170 each contribute to the substrate site. Position 197 (H197) interacts with Zn(2+). The active-site Proton donor is E200. D278 contacts Zn(2+). D279 is a binding site for substrate.

It belongs to the metallo-dependent hydrolases superfamily. Adenosine and AMP deaminases family. Adenosine deaminase subfamily. The cofactor is Zn(2+).

It carries out the reaction adenosine + H2O + H(+) = inosine + NH4(+). The catalysed reaction is 2'-deoxyadenosine + H2O + H(+) = 2'-deoxyinosine + NH4(+). Its function is as follows. Catalyzes the hydrolytic deamination of adenosine and 2-deoxyadenosine. The chain is Adenosine deaminase from Yersinia enterocolitica serotype O:8 / biotype 1B (strain NCTC 13174 / 8081).